A 480-amino-acid polypeptide reads, in one-letter code: Protein nucleotidyltransferase YdiU (480 aa).

Gly84, Gly86, Arg87, Lys107, Asp119, Gly120, Arg170, and Arg177 together coordinate ATP. Asp246 acts as the Proton acceptor in catalysis. Positions 247 and 256 each coordinate Mg(2+). Residue Asp256 participates in ATP binding.

This sequence belongs to the SELO family. Requires Mg(2+) as cofactor. Mn(2+) is required as a cofactor.

It carries out the reaction L-seryl-[protein] + ATP = 3-O-(5'-adenylyl)-L-seryl-[protein] + diphosphate. The catalysed reaction is L-threonyl-[protein] + ATP = 3-O-(5'-adenylyl)-L-threonyl-[protein] + diphosphate. It catalyses the reaction L-tyrosyl-[protein] + ATP = O-(5'-adenylyl)-L-tyrosyl-[protein] + diphosphate. The enzyme catalyses L-histidyl-[protein] + UTP = N(tele)-(5'-uridylyl)-L-histidyl-[protein] + diphosphate. It carries out the reaction L-seryl-[protein] + UTP = O-(5'-uridylyl)-L-seryl-[protein] + diphosphate. The catalysed reaction is L-tyrosyl-[protein] + UTP = O-(5'-uridylyl)-L-tyrosyl-[protein] + diphosphate. In terms of biological role, nucleotidyltransferase involved in the post-translational modification of proteins. It can catalyze the addition of adenosine monophosphate (AMP) or uridine monophosphate (UMP) to a protein, resulting in modifications known as AMPylation and UMPylation. This Pseudoalteromonas atlantica (strain T6c / ATCC BAA-1087) protein is Protein nucleotidyltransferase YdiU.